A 284-amino-acid chain; its full sequence is 16S rRNA (guanine(1405)-N(7))-methyltransferase (284 aa).

Residues Y73, 111–113 (HAS), R117, A142, D165, 191–192 (DL), L208, and Q217 each bind S-adenosyl-L-methionine.

The protein belongs to the methyltransferase superfamily. Aminoglycoside resistance family.

The enzyme catalyses guanosine(1405) in 16S rRNA + S-adenosyl-L-methionine = N(7)-methylguanosine(1405) in 16S rRNA + S-adenosyl-L-homocysteine. Its function is as follows. Specifically methylates the N(7) position of guanine 1405 in 16S rRNA. Confers resistance to various aminoglycosides, including gentamicin and kanamycin. This chain is 16S rRNA (guanine(1405)-N(7))-methyltransferase (Krm), found in Frankia casuarinae (strain DSM 45818 / CECT 9043 / HFP020203 / CcI3).